The chain runs to 72 residues: BBSome-interacting protein 1 (72 aa).

The protein belongs to the BBIP10 family.

The protein localises to the cell projection. It localises to the cilium. It is found in the cytoplasm. Its function is as follows. Required for primary cilia assembly. In Danio rerio (Zebrafish), this protein is BBSome-interacting protein 1 (bbip1).